The primary structure comprises 172 residues: Zinc finger protein 580 (172 aa).

The disordered stretch occupies residues 1 to 92; that stretch reads MLLLPPRPPH…PGEPGPRKGY (92 aa). Positions 19–30 are enriched in pro residues; it reads MDPPPPKTPPFP. Residue lysine 31 forms a Glycyl lysine isopeptide (Lys-Gly) (interchain with G-Cter in SUMO2) linkage. Residues 92 to 114 form a C2H2-type 1 zinc finger; that stretch reads YSCPECARVFASPLRLQSHRVSH. A Glycyl lysine isopeptide (Lys-Gly) (interchain with G-Cter in SUMO2) cross-link involves residue lysine 118. 2 C2H2-type zinc fingers span residues 120 to 142 and 150 to 172; these read FTCGACGKAFKRSSHLSRHRATH and HTCPLCPRRFQDAAELAQHVRLH.

Interacts with SMAD2.

It is found in the nucleus. Functionally, involved in the regulation of endothelial cell proliferation and migration. Mediates H(2)O(2)-induced leukocyte chemotaxis by elevating interleukin-8 production and may play a role in inflammation. May be involved in transcriptional regulation. The polypeptide is Zinc finger protein 580 (Znf580) (Mus musculus (Mouse)).